Consider the following 514-residue polypeptide: Light-independent protochlorophyllide reductase subunit B (514 aa).

D36 contributes to the [4Fe-4S] cluster binding site. The active-site Proton donor is D300. Residue 435–436 coordinates substrate; that stretch reads GM.

The protein belongs to the ChlB/BchB/BchZ family. As to quaternary structure, protochlorophyllide reductase is composed of three subunits; ChlL, ChlN and ChlB. Forms a heterotetramer of two ChlB and two ChlN subunits. It depends on [4Fe-4S] cluster as a cofactor.

The protein localises to the plastid. It localises to the chloroplast. The catalysed reaction is chlorophyllide a + oxidized 2[4Fe-4S]-[ferredoxin] + 2 ADP + 2 phosphate = protochlorophyllide a + reduced 2[4Fe-4S]-[ferredoxin] + 2 ATP + 2 H2O. Its pathway is porphyrin-containing compound metabolism; chlorophyll biosynthesis (light-independent). Component of the dark-operative protochlorophyllide reductase (DPOR) that uses Mg-ATP and reduced ferredoxin to reduce ring D of protochlorophyllide (Pchlide) to form chlorophyllide a (Chlide). This reaction is light-independent. The NB-protein (ChlN-ChlB) is the catalytic component of the complex. The chain is Light-independent protochlorophyllide reductase subunit B from Pleurastrum terricola (Filamentous green alga).